Here is a 265-residue protein sequence, read N- to C-terminus: O-methyltransferase NEC2 (265 aa).

It belongs to the methyltransferase superfamily.

It catalyses the reaction desmethylnectriapyrone + S-adenosyl-L-methionine = nectriapyrone + S-adenosyl-L-homocysteine + H(+). Functionally, O-methyltransferase; part of the gene cluster that mediates the biosynthesis of nectriapyrone and its analogs phomopyrone A, acropyrone and zaepyrone. The nectriapyrone biosynthetic gene cluster consists of two genes, the highly reducing polyketide synthase NEC1 that produces a demethylated analog of nectriapyrone from one unit of acetyl-CoA and one unit of malonyl-CoA; and the O-methyltransferase NEC2 that further methylates the NEC1 product to yield nectriapyrone. Nectriapyrone is further hydrolyzed to nectriapyrone D, also known as gulypyrone B, by an unidentified hydrolase localized outside the nectriapyrone cluster. This is O-methyltransferase NEC2 from Pyricularia oryzae (strain 70-15 / ATCC MYA-4617 / FGSC 8958) (Rice blast fungus).